Reading from the N-terminus, the 727-residue chain is Probable copper-importing P-type ATPase A (727 aa).

At 1–94 (MATNTKMETF…QTYLRKMKFD (94 aa)) the chain is on the cytoplasmic side. The HMA domain occupies 6–70 (KMETFVITGM…SVENIGYGAI (65 aa)). Cu(+)-binding residues include cysteine 17 and cysteine 20. Residues 95-115 (LIFSAILTLPLMLAMIAMMLG) form a helical membrane-spanning segment. Residues 116–119 (SHGP) lie on the Extracellular side of the membrane. A helical membrane pass occupies residues 120–137 (IVSFFHLSLVQLLFALPV). At 138–161 (QFYVGWRFYKGAYHALKTKAPNMD) the chain is on the cytoplasmic side. The helical transmembrane segment at 162-181 (VLVAIGTSAAFALSIYNGFF) threads the bilayer. Over 182–187 (PSHSHD) the chain is Extracellular. Residues 188 to 203 (LYFESSSMIITLILLG) form a helical membrane-spanning segment. The Cytoplasmic segment spans residues 204–341 (KYLEHTAKSK…PIQQIADKIS (138 aa)). A helical transmembrane segment spans residues 342 to 362 (GIFVPIVLFLALVTLLVTGWL). Residues 363-375 (TKDWQLALLHSVS) lie on the Extracellular side of the membrane. A helical transmembrane segment spans residues 376 to 396 (VLVIACPCALGLATPTAIMVG). Residues 397–678 (TGVGAHNGIL…AATLKKIKQN (282 aa)) are Cytoplasmic-facing. The active-site 4-aspartylphosphate intermediate is the aspartate 425. Mg(2+) contacts are provided by aspartate 621 and aspartate 625. Residues 679–698 (LFWAFIYNTIGIPFAAFGFL) form a helical membrane-spanning segment. Residues 699–700 (NP) lie on the Extracellular side of the membrane. A helical membrane pass occupies residues 701–721 (IIAGGAMAFSSISVLLNSLSL). Residues 722–727 (NRKTIK) are Cytoplasmic-facing.

The protein belongs to the cation transport ATPase (P-type) (TC 3.A.3) family. Type IB subfamily. In terms of assembly, monomer. Interacts with the copper chaperone CopZ.

The protein resides in the cell membrane. The catalysed reaction is Cu(+)(in) + ATP + H2O = Cu(+)(out) + ADP + phosphate + H(+). Inhibited by vanadate. Its function is as follows. Probably involved in copper import under copper limiting conditions. The polypeptide is Probable copper-importing P-type ATPase A (copA) (Enterococcus hirae (strain ATCC 9790 / DSM 20160 / JCM 8729 / LMG 6399 / NBRC 3181 / NCIMB 6459 / NCDO 1258 / NCTC 12367 / WDCM 00089 / R)).